An 882-amino-acid polypeptide reads, in one-letter code: Pyruvate dehydrogenase E1 component (882 aa).

In terms of assembly, homodimer. Part of the PDH complex, consisting of multiple copies of pyruvate dehydrogenase (E1), dihydrolipoamide acetyltransferase (E2) and lipoamide dehydrogenase (E3). The cofactor is thiamine diphosphate.

It carries out the reaction N(6)-[(R)-lipoyl]-L-lysyl-[protein] + pyruvate + H(+) = N(6)-[(R)-S(8)-acetyldihydrolipoyl]-L-lysyl-[protein] + CO2. Functionally, component of the pyruvate dehydrogenase (PDH) complex, that catalyzes the overall conversion of pyruvate to acetyl-CoA and CO(2). This is Pyruvate dehydrogenase E1 component (aceE) from Pseudomonas aeruginosa (strain ATCC 15692 / DSM 22644 / CIP 104116 / JCM 14847 / LMG 12228 / 1C / PRS 101 / PAO1).